The chain runs to 510 residues: Pheromone-processing carboxypeptidase kex1 (510 aa).

The first 21 residues, 1-21, serve as a signal peptide directing secretion; sequence MISKLLKIVLLTAGVIGNTLA. At 22–468 the chain is on the lumenal side; sequence DSRIHEQYLV…SPDLGNGNYK (447 aa). N-linked (GlcNAc...) asparagine glycosylation is found at Asn-51 and Asn-104. Catalysis depends on residues Ser-175 and Asp-367. 2 N-linked (GlcNAc...) asparagine glycosylation sites follow: Asn-392 and Asn-416. The active site involves His-427. A helical transmembrane segment spans residues 469 to 489; the sequence is WLYLGLIPVALTIIILFSIYL. Topologically, residues 490–510 are cytoplasmic; it reads CRRFGLFGLSKQRYQPISPTP.

This sequence belongs to the peptidase S10 family.

Its subcellular location is the golgi apparatus. The protein localises to the trans-Golgi network membrane. It is found in the vacuole membrane. It carries out the reaction Preferential release of a C-terminal arginine or lysine residue.. Its function is as follows. Protease with a carboxypeptidase B-like function involved in the C-terminal processing of the lysine and arginine residues from protein precursors. Promotes cell fusion and is involved in the programmed cell death. The polypeptide is Pheromone-processing carboxypeptidase kex1 (kex1) (Schizosaccharomyces pombe (strain 972 / ATCC 24843) (Fission yeast)).